The chain runs to 288 residues: tRNA dimethylallyltransferase (288 aa).

17-24 (GPTASGKS) contributes to the ATP binding site. Substrate is bound at residue 19–24 (TASGKS).

It belongs to the IPP transferase family. Monomer. Requires Mg(2+) as cofactor.

It catalyses the reaction adenosine(37) in tRNA + dimethylallyl diphosphate = N(6)-dimethylallyladenosine(37) in tRNA + diphosphate. Catalyzes the transfer of a dimethylallyl group onto the adenine at position 37 in tRNAs that read codons beginning with uridine, leading to the formation of N6-(dimethylallyl)adenosine (i(6)A). The chain is tRNA dimethylallyltransferase from Ruegeria sp. (strain TM1040) (Silicibacter sp.).